Consider the following 82-residue polypeptide: Beta-defensin 113 (82 aa).

A signal peptide spans 1-16 (MKILCIFLTFVFTVSC). Cystine bridges form between cysteine 35-cysteine 61, cysteine 42-cysteine 56, and cysteine 46-cysteine 62.

Belongs to the beta-defensin family.

The protein resides in the secreted. In terms of biological role, has antibacterial activity. This is Beta-defensin 113 (DEFB113) from Homo sapiens (Human).